Consider the following 118-residue polypeptide: Ribonuclease P protein component (118 aa).

Belongs to the RnpA family. In terms of assembly, consists of a catalytic RNA component (M1 or rnpB) and a protein subunit.

It carries out the reaction Endonucleolytic cleavage of RNA, removing 5'-extranucleotides from tRNA precursor.. RNaseP catalyzes the removal of the 5'-leader sequence from pre-tRNA to produce the mature 5'-terminus. It can also cleave other RNA substrates such as 4.5S RNA. The protein component plays an auxiliary but essential role in vivo by binding to the 5'-leader sequence and broadening the substrate specificity of the ribozyme. The protein is Ribonuclease P protein component of Shewanella putrefaciens (strain CN-32 / ATCC BAA-453).